Here is a 308-residue protein sequence, read N- to C-terminus: tRNA dimethylallyltransferase (308 aa).

19 to 26 is a binding site for ATP; that stretch reads GPTASGKS. Residue 21–26 coordinates substrate; sequence TASGKS. An interaction with substrate tRNA region spans residues 44–47; sequence DSMQ.

It belongs to the IPP transferase family. As to quaternary structure, monomer. Requires Mg(2+) as cofactor.

It carries out the reaction adenosine(37) in tRNA + dimethylallyl diphosphate = N(6)-dimethylallyladenosine(37) in tRNA + diphosphate. Its function is as follows. Catalyzes the transfer of a dimethylallyl group onto the adenine at position 37 in tRNAs that read codons beginning with uridine, leading to the formation of N6-(dimethylallyl)adenosine (i(6)A). The protein is tRNA dimethylallyltransferase of Methylobacterium radiotolerans (strain ATCC 27329 / DSM 1819 / JCM 2831 / NBRC 15690 / NCIMB 10815 / 0-1).